Here is a 966-residue protein sequence, read N- to C-terminus: RNA polymerase-associated protein RapA (966 aa).

Residues Glu163–Asp337 form the Helicase ATP-binding domain. Residue Asp176 to Thr183 participates in ATP binding. The short motif at Asp283–His286 is the DEAH box element. The Helicase C-terminal domain maps to Arg488 to Glu642.

This sequence belongs to the SNF2/RAD54 helicase family. RapA subfamily. As to quaternary structure, interacts with the RNAP. Has a higher affinity for the core RNAP than for the holoenzyme. Its ATPase activity is stimulated by binding to RNAP.

Its function is as follows. Transcription regulator that activates transcription by stimulating RNA polymerase (RNAP) recycling in case of stress conditions such as supercoiled DNA or high salt concentrations. Probably acts by releasing the RNAP, when it is trapped or immobilized on tightly supercoiled DNA. Does not activate transcription on linear DNA. Probably not involved in DNA repair. This chain is RNA polymerase-associated protein RapA, found in Actinobacillus succinogenes (strain ATCC 55618 / DSM 22257 / CCUG 43843 / 130Z).